The primary structure comprises 205 residues: Dephospho-CoA kinase (205 aa).

The DPCK domain maps to 13 to 205 (RIGLTGGIAS…KWINTIREIL (193 aa)). 21-26 (ASGKST) serves as a coordination point for ATP.

The protein belongs to the CoaE family.

The protein localises to the cytoplasm. It carries out the reaction 3'-dephospho-CoA + ATP = ADP + CoA + H(+). It participates in cofactor biosynthesis; coenzyme A biosynthesis; CoA from (R)-pantothenate: step 5/5. Functionally, catalyzes the phosphorylation of the 3'-hydroxyl group of dephosphocoenzyme A to form coenzyme A. In Prochlorococcus marinus (strain MIT 9312), this protein is Dephospho-CoA kinase.